The chain runs to 178 residues: ATP-dependent protease subunit HslV (178 aa).

The active site involves Thr7. 3 residues coordinate Na(+): Gly162, Cys165, and Thr168.

It belongs to the peptidase T1B family. HslV subfamily. In terms of assembly, a double ring-shaped homohexamer of HslV is capped on each side by a ring-shaped HslU homohexamer. The assembly of the HslU/HslV complex is dependent on binding of ATP.

It localises to the cytoplasm. It carries out the reaction ATP-dependent cleavage of peptide bonds with broad specificity.. Allosterically activated by HslU binding. Functionally, protease subunit of a proteasome-like degradation complex believed to be a general protein degrading machinery. In Sulfurihydrogenibium sp. (strain YO3AOP1), this protein is ATP-dependent protease subunit HslV.